Reading from the N-terminus, the 883-residue chain is MSELLFSLNFLLLLLLSCVSPSSFFTFNNPVVGLGACGPHQIQAFTQFKNEFDTRACNHSDPWNGVWCDDSTGAVTMLQLRACLSGTLKPNSSLFQFHHLRSLLLPHNNFTSSSISSKFGMLNNLEVLSLSSSGFLAQVPFSFSNLSMLSALVLSNNDLTGSLSFARNLRKLRVLDVSYNHFSGILNPNSSLFELHHIIYLNLRYNNFTSSSLPYEFGNLNKLEVLDVSSNSFFGQVPPTISNLTQLTELYLPLNHFTGSLPLVQNLTKLSILHLFGNHFSGTIPSSLFTMPFLSYLSLKGNNLNGSIEVPNSSSSSRLESLHLGENHFEGKILEPISKLINLKELDLSFLNTSYPIDLSLFSSLKSLLLLDLSGDWISKASLTLDSYIPSTLEVLRLEHCDISDFPNVFKTLHNLEYIALSNNRISGKFPEWLWSLPRLSSVFITDNLLTGFEGSSEVLVNSSVQILSLDTNSLEGALPHLPLSINYFSAIDNRFGGDIPLSICNRSSLDVLDLSYNNFTGPIPPCLSNLLYLKLRKNNLEGSIPDKYYEDTPLRSLDVGYNRLTGKLPRSLINCSALQFLSVDHNGIKDTFPFSLKALPKLQVLLLSSNKFYGPLSPPNEGPLGFPELRILEIAGNKLTGSLSSDFFVNWKASSHTMNEDLGLYMVYGKVIFGNYHLTYYETIDLRYKGLSMEQRNVLTSSATIDFSGNRLEGEIPESIGLLKALIALNLSNNAFTGHIPLSFANLKKMESLDLSSNQLSGTIPNGLRTLSFLAYVNVSHNQLIGEIPQGTQITGQPKSSFEGNAGLCGFPLQESCFGTNTPPAQHPKEQEEEEEDEQVLNWKAVAIGYGIGVLLGLAIAQLISLYKPKWLASLVIKSRNC.

A signal peptide spans 1 to 21 (MSELLFSLNFLLLLLLSCVSP). Topologically, residues 22-846 (SSFFTFNNPV…EDEQVLNWKA (825 aa)) are extracellular. 3 N-linked (GlcNAc...) asparagine glycosylation sites follow: asparagine 58, asparagine 91, and asparagine 109. LRR repeat units follow at residues 97-121 (FHHL…KFGM) and 122-143 (LNNL…PFSF). The N-linked (GlcNAc...) asparagine glycan is linked to asparagine 145. 14 LRR repeats span residues 146–169 (LSML…ARNL), 170–195 (RKLR…LFEL), 197–219 (HIIY…EFGN), 220–244 (LNKL…ISNL), 246–267 (QLTE…VQNL), 268–291 (TKLS…LFTM), 293–316 (FLSY…SSSS), 317–340 (SRLE…ISKL), 342–364 (NLKE…LFSS), 365–390 (LKSL…SYIP), 391–412 (STLE…VFKT), 413–437 (LHNL…LWSL), 439–462 (RLSS…VLVN), and 463–486 (SSVQ…PLSI). N-linked (GlcNAc...) asparagine glycosylation is found at asparagine 189, asparagine 207, asparagine 243, and asparagine 266. N-linked (GlcNAc...) asparagine glycans are attached at residues asparagine 305 and asparagine 312. N-linked (GlcNAc...) asparagine glycosylation occurs at asparagine 352. Asparagine 462 carries N-linked (GlcNAc...) asparagine glycosylation. The stretch at 487 to 506 (NYFSAIDNRFGGDIPLSICN) is one LRR 17; degenerate repeat. 2 N-linked (GlcNAc...) asparagine glycosylation sites follow: asparagine 506 and asparagine 519. 10 LRR repeats span residues 507–528 (RSSL…PPCL), 529–552 (SNLL…YYED), 554–576 (PLRS…LINC), 578–600 (ALQF…LKAL), 601–624 (PKLQ…NEGP), 627–651 (FPEL…FFVN), 701–724 (TSSA…IGLL), 725–747 (KALI…SFAN), 748–772 (LKKM…LRTL), and 774–797 (FLAY…QITG). Residue asparagine 575 is glycosylated (N-linked (GlcNAc...) asparagine). Asparagine 731 is a glycosylation site (N-linked (GlcNAc...) asparagine). Asparagine 779 is a glycosylation site (N-linked (GlcNAc...) asparagine). A helical membrane pass occupies residues 847–867 (VAIGYGIGVLLGLAIAQLISL). The Cytoplasmic segment spans residues 868–883 (YKPKWLASLVIKSRNC).

It belongs to the RLP family.

It localises to the cell membrane. The polypeptide is Receptor-like protein 40 (Arabidopsis thaliana (Mouse-ear cress)).